A 318-amino-acid chain; its full sequence is HPr kinase/phosphorylase (318 aa).

Catalysis depends on residues H143 and K164. ATP is bound at residue 158-165; sequence GKSGVGKS. S165 lines the Mg(2+) pocket. D182 serves as the catalytic Proton acceptor; for phosphorylation activity. Proton donor; for dephosphorylation activity. Residues 206-215 are important for the catalytic mechanism of both phosphorylation and dephosphorylation; sequence MEIRGLGILN. E207 is a binding site for Mg(2+). Residue R248 is part of the active site. The segment at 269–274 is important for the catalytic mechanism of dephosphorylation; the sequence is PVKPGR.

It belongs to the HPrK/P family. As to quaternary structure, homohexamer. Mg(2+) is required as a cofactor.

The enzyme catalyses [HPr protein]-L-serine + ATP = [HPr protein]-O-phospho-L-serine + ADP + H(+). The catalysed reaction is [HPr protein]-O-phospho-L-serine + phosphate + H(+) = [HPr protein]-L-serine + diphosphate. Its function is as follows. Catalyzes the ATP- as well as the pyrophosphate-dependent phosphorylation of a specific serine residue in HPr, a phosphocarrier protein of the phosphoenolpyruvate-dependent sugar phosphotransferase system (PTS). HprK/P also catalyzes the pyrophosphate-producing, inorganic phosphate-dependent dephosphorylation (phosphorolysis) of seryl-phosphorylated HPr (P-Ser-HPr). This is HPr kinase/phosphorylase from Leptospira borgpetersenii serovar Hardjo-bovis (strain L550).